Here is a 378-residue protein sequence, read N- to C-terminus: E3 ubiquitin-protein ligase ATL9 (378 aa).

The signal sequence occupies residues 1–33 (MAILDTKSSRWIPHNLLFLLLLLLLQSVPYGFG). The helical transmembrane segment at 51–71 (VVVVITVLFLVIFFMVFGSIF) threads the bilayer. An RING-type; atypical zinc finger spans residues 135-177 (CAVCLCEFEDDETLRLMPPCCHVFHADCVDVWLSEHSTCPLCR). Disordered regions lie at residues 187–211 (DDDD…DPER), 300–326 (ARSS…RKSN), and 350–378 (FSGD…DERV). A compositionally biased stretch (polar residues) spans 193–207 (ESYSGTDPGTISSST). Over residues 301–317 (RSSRSGYRSGSVGSERS) the composition is skewed to low complexity. Positions 364–378 (AGERSFERLRPDERV) are enriched in basic and acidic residues.

It belongs to the RING-type zinc finger family. ATL subfamily.

The protein resides in the membrane. The enzyme catalyses S-ubiquitinyl-[E2 ubiquitin-conjugating enzyme]-L-cysteine + [acceptor protein]-L-lysine = [E2 ubiquitin-conjugating enzyme]-L-cysteine + N(6)-ubiquitinyl-[acceptor protein]-L-lysine.. The protein operates within protein modification; protein ubiquitination. E3 ubiquitin-protein ligase able to catalyze polyubiquitination with ubiquitin-conjugating enzyme E2 UBC8 in vitro. May be involved in the early steps of the plant defense signaling pathway. The sequence is that of E3 ubiquitin-protein ligase ATL9 (ATL9) from Arabidopsis thaliana (Mouse-ear cress).